Consider the following 526-residue polypeptide: Transcription factor MYC1 (526 aa).

Residues 330–351 form a disordered region; that stretch reads MFPSQNSGLNQDDPSDRRKENE. The segment covering 332 to 341 has biased composition (polar residues); that stretch reads PSQNSGLNQD. Residues 333–382 enclose the bHLH domain; the sequence is SQNSGLNQDDPSDRRKENEKFSVLRTMVPTVNEVDKESILNNTIKYLQEL.

Homodimer. Interacts with MYB75/PAP1, MYB90/PAP2, MYB4, MYB5, MYB6, MYB23, MYB82, MYB113, MYB114, TT2, MYB0/GL1, and MYB66/WER. Mostly expressed in developing seeds. Also detected in stems and leaves.

The protein localises to the nucleus. In terms of biological role, trancsription activator, when associated with MYB75/PAP1 or MYB90/PAP2. This is Transcription factor MYC1 (BHLH12) from Arabidopsis thaliana (Mouse-ear cress).